Consider the following 304-residue polypeptide: MPQKDLLETIIEQVRPLLGKGKVADYIPALAEVDPTKLGIAVTTIDGQTIGAGDYLEPFSIQSISKVFSLTVALTLYEEAEIWSRVGKEPSGQSFNSLVQIELERGVPRNPFINAGALIIADLLQSRLGAPKHRMLEVVRKLSANPHVIYDKRVAASEYEHSARNAAIAYLMKSFGNFNNDVDRVLRNYFHYCALKMSCADLSKAMLYLANRGQSLSAEQVVSPIQTRKLNALLATSGLYDGAGEFAYRVGMPGKSGVGGGIIAVIPGDMSICVWSPELDKNGNSLAGTAALEKLSQALGRSIF.

Residues serine 63, asparagine 114, glutamate 158, asparagine 165, tyrosine 189, tyrosine 240, and valine 258 each contribute to the substrate site.

The protein belongs to the glutaminase family. In terms of assembly, homotetramer.

The enzyme catalyses L-glutamine + H2O = L-glutamate + NH4(+). The polypeptide is Glutaminase (Shewanella loihica (strain ATCC BAA-1088 / PV-4)).